The sequence spans 1092 residues: Leukemia inhibitory factor receptor (1092 aa).

The signal sequence occupies residues 1–43; sequence MAAYSWWRQPSWMVDNKRSRMTPNLPWLLSALTLLHLTMHANG. Topologically, residues 44–828 are extracellular; it reads LKRGVQDLKC…SMFVVTKENS (785 aa). Residues 45–126 form the Fibronectin type-III 1 domain; the sequence is KRGVQDLKCT…QSKFTLNEKD (82 aa). 2 disulfides stabilise this stretch: C53/C63 and C80/C88. N-linked (GlcNAc...) asparagine glycans are attached at residues N164, N199, N238, and N261. Intrachain disulfides connect C208/C265 and C336/C346. Fibronectin type-III domains lie at 330–429, 430–529, 533–624, 622–714, and 719–828; these read VPQK…VAPH, DPTS…TEAT, GPDT…IPND, PNDD…IGYV, and PIVA…KENS. N385, N402, N421, N440, N453, and N476 each carry an N-linked (GlcNAc...) asparagine glycan. C461 and C506 are disulfide-bonded. Residues 514 to 518 carry the WSXWS motif motif; that stretch reads WSRWS. N567, N647, N658, N675, N724, and N782 each carry an N-linked (GlcNAc...) asparagine glycan. Residues 829–853 form a helical membrane-spanning segment; the sequence is VGLIIAILIPVAVAVIVGVVTSILC. The Cytoplasmic portion of the chain corresponds to 854–1092; sequence YRKREWIKET…TNFFQNKPND (239 aa). A Box 1 motif motif is present at residues 864–872; it reads FYPDIPNPE. Phosphoserine is present on residues S922 and S1039. The interval 1009–1092 is disordered; that stretch reads EDTAAEDEEG…TNFFQNKPND (84 aa). Composition is skewed to polar residues over residues 1027–1062 and 1081–1092; these read ANVNTWNLVSPDSPRSTDSNNEVVSFGSPCSINSRQ and SFTNFFQNKPND.

This sequence belongs to the type I cytokine receptor family. Type 2 subfamily. As to quaternary structure, heterodimer composed of LIFR and IL6ST. The heterodimer formed by LIFR and IL6ST interacts with the complex formed by CNTF and CNTFR. Placenta, liver, kidney, heart, lung, brain, and embryos. The liver may be the primary site of synthesis of the secreted form.

It is found in the cell membrane. The protein resides in the secreted. In terms of biological role, signal-transducing molecule. May have a common pathway with IL6ST. The soluble form inhibits the biological activity of LIF by blocking its binding to receptors on target cells. The polypeptide is Leukemia inhibitory factor receptor (Lifr) (Mus musculus (Mouse)).